The following is a 1576-amino-acid chain: ABC transporter ALT5 (1576 aa).

Transmembrane regions (helical) follow at residues Leu27–Val47, Ile72–Thr92, Gly99–Cys119, Leu267–Pro287, Leu289–Leu309, Gly321–Trp341, Val387–Val407, Gly417–Gly437, Ile500–Ala520, and Val525–Gly545. The ABC transmembrane type-1 1 domain occupies Leu289–Ser556. The ABC transporter 1 domain maps to Phe602–Val834. Gly636–Ser643 is an ATP binding site. The next 7 helical transmembrane spans lie at Val915–Pro935, Phe957–Met977, Val981–Met1001, Leu1035–Ala1054, Ala1060–Leu1078, Trp1142–Val1162, and Gly1171–Met1191. The region spanning Val919–Thr1199 is the ABC transmembrane type-1 2 domain. Residues Ile1236–Glu1567 enclose the ABC transporter 2 domain. Gly1278–Ser1285 provides a ligand contact to ATP.

Belongs to the ABC transporter superfamily. ABCC family. Conjugate transporter (TC 3.A.1.208) subfamily.

Its subcellular location is the cell membrane. ABC transporter that may provide the dual role AAL-toxin export and self-protection by allowing the fungus to evade the harmful effect of its own AAL-toxin production. The polypeptide is ABC transporter ALT5 (Alternaria alternata (Alternaria rot fungus)).